Consider the following 428-residue polypeptide: Tryptophan synthase beta chain (428 aa).

K92 bears the N6-(pyridoxal phosphate)lysine mark.

Belongs to the TrpB family. In terms of assembly, tetramer of two alpha and two beta chains. Requires pyridoxal 5'-phosphate as cofactor.

The enzyme catalyses (1S,2R)-1-C-(indol-3-yl)glycerol 3-phosphate + L-serine = D-glyceraldehyde 3-phosphate + L-tryptophan + H2O. Its pathway is amino-acid biosynthesis; L-tryptophan biosynthesis; L-tryptophan from chorismate: step 5/5. In terms of biological role, the beta subunit is responsible for the synthesis of L-tryptophan from indole and L-serine. In Leptothrix cholodnii (strain ATCC 51168 / LMG 8142 / SP-6) (Leptothrix discophora (strain SP-6)), this protein is Tryptophan synthase beta chain.